Reading from the N-terminus, the 307-residue chain is Actin maturation protease (307 aa).

Residues 1-34 form a disordered region; that stretch reads MSLENDAAAPPPPPLPPPPPPQPPSLARSESSKK. A compositionally biased stretch (pro residues) spans 9 to 24; the sequence is APPPPPLPPPPPPQPP. Residues 80 to 200 are peptidase C39-like; the sequence is SLIQDGPQCG…WAVASGILLG (121 aa). The active site involves cysteine 88.

It belongs to the ACTMAP family.

The protein resides in the cytoplasm. It carries out the reaction N-terminal N(alpha)-acetyl-L-methionyl-L-aspartyl-[protein] + H2O = N-terminal L-aspartyl-[protein] + N-acetyl-L-methionine. The enzyme catalyses N-terminal N(alpha)-acetyl-L-methionyl-L-glutamyl-[protein] + H2O = N-terminal L-glutamyl-[protein] + N-acetyl-L-methionine. The catalysed reaction is N-terminal N(alpha)-acetyl-L-cysteinyl-L-aspartyl-[protein] + H2O = N-terminal L-aspartyl-[protein] + N-acetyl-L-cysteine. It catalyses the reaction N-terminal N(alpha)-acetyl-L-cysteinyl-L-glutamyl-[protein] + H2O = N-terminal L-glutamyl-[protein] + N-acetyl-L-cysteine. Its function is as follows. Actin maturation protease that specifically mediates the cleavage of immature acetylated N-terminal actin, thereby contributing to actin maturation. Cleaves N-terminal acetylated methionine of immature cytoplasmic actin after translation. Cleaves N-terminal acetylated cysteine of muscle actin after canonical removal of N-terminal methionine. This is Actin maturation protease from Danio rerio (Zebrafish).